Here is a 190-residue protein sequence, read N- to C-terminus: Xanthine phosphoribosyltransferase (190 aa).

Residues leucine 20 and asparagine 27 each coordinate xanthine. Position 128–132 (128–132) interacts with 5-phospho-alpha-D-ribose 1-diphosphate; sequence ANGKA. Lysine 156 contacts xanthine.

This sequence belongs to the purine/pyrimidine phosphoribosyltransferase family. Xpt subfamily. As to quaternary structure, homodimer.

Its subcellular location is the cytoplasm. It carries out the reaction XMP + diphosphate = xanthine + 5-phospho-alpha-D-ribose 1-diphosphate. The protein operates within purine metabolism; XMP biosynthesis via salvage pathway; XMP from xanthine: step 1/1. Its function is as follows. Converts the preformed base xanthine, a product of nucleic acid breakdown, to xanthosine 5'-monophosphate (XMP), so it can be reused for RNA or DNA synthesis. The polypeptide is Xanthine phosphoribosyltransferase (Pseudomonas putida (strain ATCC 700007 / DSM 6899 / JCM 31910 / BCRC 17059 / LMG 24140 / F1)).